Here is a 67-residue protein sequence, read N- to C-terminus: Large ribosomal subunit protein bL35 (67 aa).

This sequence belongs to the bacterial ribosomal protein bL35 family.

The chain is Large ribosomal subunit protein bL35 from Methylorubrum populi (strain ATCC BAA-705 / NCIMB 13946 / BJ001) (Methylobacterium populi).